The primary structure comprises 99 residues: Elongin-C (99 aa).

Ser2 bears the N-acetylserine mark. Residue Ser2 is modified to Phosphoserine.

Belongs to the SKP1 family. As to quaternary structure, heterodimer with ELA1. Component of a CRL3 E3 ubiquitin ligase complex consisting of the cullin CUL3, the linker protein ELC1, the substrate receptor ELA1, and the RING protein HRT1. Interacts with CIN5. Interacts with PCL6. Interacts with SNF4. Interacts with the large RNA polymerase II subunit RPO21 in a manner dependent on DEF1. Interacts with DEF1. Interacts with RAD7. Interacts with RAD16.

The protein resides in the cytoplasm. The protein localises to the nucleus. In terms of biological role, as part of the CRL3 E3 ubiquitin ligase complex; polyubiquitylates monoubiquitylated RNA polymerase II subunit RPO21 to trigger its proteolysis; plays a role in global genomic repair. Prevents degradation of interacting proteins like PCL6 by the proteasome. The protein is Elongin-C (ELC1) of Saccharomyces cerevisiae (strain ATCC 204508 / S288c) (Baker's yeast).